The chain runs to 624 residues: Actin-related protein 8 (624 aa).

The residue at position 1 (M1) is an N-acetylmethionine. A compositionally biased stretch (basic and acidic residues) spans 1–25; it reads MTQAEKGEAENGKEKGGEKEKEQRG. The disordered stretch occupies residues 1–29; sequence MTQAEKGEAENGKEKGGEKEKEQRGVKRP. Residues S55 and T56 each coordinate ATP. The residue at position 132 (S132) is a Phosphoserine. An ATP-binding site is contributed by 283–286; it reads DVGD. Phosphoserine is present on S412. Residues 430–462 are disordered; sequence SKQEQSAKATADRKSASKPIGFEGDLRGQSSDL.

Belongs to the actin family. ARP8 subfamily. Component of the chromatin remodeling INO80 complex; specifically part of a complex module associated with the DBINO domain of INO80. Exists as monomers and dimers, but the dimer is most probably the biologically relevant form required for stable interactions with histones that exploits the twofold symmetry of the nucleosome core.

The protein localises to the nucleus. Its subcellular location is the chromosome. Functionally, plays an important role in the functional organization of mitotic chromosomes. Exhibits low basal ATPase activity, and unable to polymerize. Its function is as follows. Proposed core component of the chromatin remodeling INO80 complex which is involved in transcriptional regulation, DNA replication and probably DNA repair. Required for the recruitment of INO80 (and probably the INO80 complex) to sites of DNA damage Strongly prefer nucleosomes and H3-H4 tetramers over H2A-H2B dimers, suggesting it may act as a nucleosome recognition module within the complex. The polypeptide is Actin-related protein 8 (ACTR8) (Bos taurus (Bovine)).